A 914-amino-acid chain; its full sequence is Isoleucine--tRNA ligase (914 aa).

Positions 64-74 (PYANGNFHLGH) match the 'HIGH' region motif. An L-isoleucyl-5'-AMP-binding site is contributed by Glu557. The short motif at 598 to 602 (PMSKS) is the 'KMSKS' region element. Lys601 is a binding site for ATP. Cys889, Cys892, Cys906, and Cys909 together coordinate Zn(2+).

It belongs to the class-I aminoacyl-tRNA synthetase family. IleS type 1 subfamily. Monomer. Zn(2+) is required as a cofactor.

The protein localises to the cytoplasm. The catalysed reaction is tRNA(Ile) + L-isoleucine + ATP = L-isoleucyl-tRNA(Ile) + AMP + diphosphate. In terms of biological role, catalyzes the attachment of isoleucine to tRNA(Ile). As IleRS can inadvertently accommodate and process structurally similar amino acids such as valine, to avoid such errors it has two additional distinct tRNA(Ile)-dependent editing activities. One activity is designated as 'pretransfer' editing and involves the hydrolysis of activated Val-AMP. The other activity is designated 'posttransfer' editing and involves deacylation of mischarged Val-tRNA(Ile). This Leptospira interrogans serogroup Icterohaemorrhagiae serovar copenhageni (strain Fiocruz L1-130) protein is Isoleucine--tRNA ligase.